We begin with the raw amino-acid sequence, 359 residues long: 3-dehydroquinate synthase (359 aa).

Residues 72-77 (DGEQYK), 106-110 (GVIGD), 130-131 (TT), Lys143, Lys152, and 170-173 (CLKT) each bind NAD(+). The Zn(2+) site is built by Glu185, His248, and His265.

Belongs to the sugar phosphate cyclases superfamily. Dehydroquinate synthase family. The cofactor is Co(2+). Requires Zn(2+) as cofactor. NAD(+) serves as cofactor.

It localises to the cytoplasm. The catalysed reaction is 7-phospho-2-dehydro-3-deoxy-D-arabino-heptonate = 3-dehydroquinate + phosphate. Its pathway is metabolic intermediate biosynthesis; chorismate biosynthesis; chorismate from D-erythrose 4-phosphate and phosphoenolpyruvate: step 2/7. In terms of biological role, catalyzes the conversion of 3-deoxy-D-arabino-heptulosonate 7-phosphate (DAHP) to dehydroquinate (DHQ). The sequence is that of 3-dehydroquinate synthase from Photobacterium profundum (strain SS9).